Here is a 465-residue protein sequence, read N- to C-terminus: L-seryl-tRNA(Sec) selenium transferase (465 aa).

Position 294 is an N6-(pyridoxal phosphate)lysine (Lys294).

The protein belongs to the SelA family. The cofactor is pyridoxal 5'-phosphate.

It is found in the cytoplasm. It catalyses the reaction L-seryl-tRNA(Sec) + selenophosphate + H(+) = L-selenocysteinyl-tRNA(Sec) + phosphate. Its pathway is aminoacyl-tRNA biosynthesis; selenocysteinyl-tRNA(Sec) biosynthesis; selenocysteinyl-tRNA(Sec) from L-seryl-tRNA(Sec) (bacterial route): step 1/1. Its function is as follows. Converts seryl-tRNA(Sec) to selenocysteinyl-tRNA(Sec) required for selenoprotein biosynthesis. In Mannheimia succiniciproducens (strain KCTC 0769BP / MBEL55E), this protein is L-seryl-tRNA(Sec) selenium transferase.